The following is a 197-amino-acid chain: Ribosomal RNA large subunit methyltransferase E (197 aa).

Residues Gly-50, Trp-52, Asp-70, Asp-88, and Asp-111 each coordinate S-adenosyl-L-methionine. Lys-151 acts as the Proton acceptor in catalysis.

This sequence belongs to the class I-like SAM-binding methyltransferase superfamily. RNA methyltransferase RlmE family.

The protein resides in the cytoplasm. The catalysed reaction is uridine(2552) in 23S rRNA + S-adenosyl-L-methionine = 2'-O-methyluridine(2552) in 23S rRNA + S-adenosyl-L-homocysteine + H(+). Functionally, specifically methylates the uridine in position 2552 of 23S rRNA at the 2'-O position of the ribose in the fully assembled 50S ribosomal subunit. The chain is Ribosomal RNA large subunit methyltransferase E from Syntrophobacter fumaroxidans (strain DSM 10017 / MPOB).